The primary structure comprises 469 residues: UDP-N-acetylmuramate--L-alanine ligase (469 aa).

Position 113–119 (113–119 (GAHGKTT)) interacts with ATP.

The protein belongs to the MurCDEF family.

The protein resides in the cytoplasm. The catalysed reaction is UDP-N-acetyl-alpha-D-muramate + L-alanine + ATP = UDP-N-acetyl-alpha-D-muramoyl-L-alanine + ADP + phosphate + H(+). The protein operates within cell wall biogenesis; peptidoglycan biosynthesis. In terms of biological role, cell wall formation. The chain is UDP-N-acetylmuramate--L-alanine ligase from Syntrophobacter fumaroxidans (strain DSM 10017 / MPOB).